Here is a 255-residue protein sequence, read N- to C-terminus: Alpha-acetolactate decarboxylase (255 aa).

Belongs to the alpha-acetolactate decarboxylase family.

The catalysed reaction is (2S)-2-acetolactate + H(+) = (R)-acetoin + CO2. It participates in polyol metabolism; (R,R)-butane-2,3-diol biosynthesis; (R,R)-butane-2,3-diol from pyruvate: step 2/3. Functionally, converts acetolactate into acetoin, which can be excreted by the cells. This may be a mechanism for controlling the internal pH of cells in the stationary stage. The sequence is that of Alpha-acetolactate decarboxylase (alsD) from Bacillus subtilis (strain 168).